The sequence spans 408 residues: Succinylornithine transaminase (408 aa).

Residue K252 is modified to N6-(pyridoxal phosphate)lysine.

Belongs to the class-III pyridoxal-phosphate-dependent aminotransferase family. AstC subfamily. Pyridoxal 5'-phosphate is required as a cofactor.

It carries out the reaction N(2)-succinyl-L-ornithine + 2-oxoglutarate = N-succinyl-L-glutamate 5-semialdehyde + L-glutamate. It functions in the pathway amino-acid degradation; L-arginine degradation via AST pathway; L-glutamate and succinate from L-arginine: step 3/5. In terms of biological role, catalyzes the transamination of N(2)-succinylornithine and alpha-ketoglutarate into N(2)-succinylglutamate semialdehyde and glutamate. Can also act as an acetylornithine aminotransferase. The protein is Succinylornithine transaminase of Salmonella paratyphi B (strain ATCC BAA-1250 / SPB7).